The chain runs to 208 residues: N-(5'-phosphoribosyl)anthranilate isomerase (208 aa).

Belongs to the TrpF family.

The catalysed reaction is N-(5-phospho-beta-D-ribosyl)anthranilate = 1-(2-carboxyphenylamino)-1-deoxy-D-ribulose 5-phosphate. It functions in the pathway amino-acid biosynthesis; L-tryptophan biosynthesis; L-tryptophan from chorismate: step 3/5. The protein is N-(5'-phosphoribosyl)anthranilate isomerase of Natronomonas pharaonis (strain ATCC 35678 / DSM 2160 / CIP 103997 / JCM 8858 / NBRC 14720 / NCIMB 2260 / Gabara) (Halobacterium pharaonis).